The chain runs to 602 residues: DEAD-box ATP-dependent RNA helicase 53 (602 aa).

The segment covering 33–43 (ASPLDPCRGPA) has biased composition (low complexity). Positions 33–76 (ASPLDPCRGPAAPEPPRRRAFHGSPSPLGFRSTPASWSSPEAGA) are disordered. The Q motif signature appears at 84–112 (LEVARLGISPWIVERLAARGITRLFPIQR). Residues 115–288 (LDPAMQGKDM…SKYLKDPIII (174 aa)) enclose the Helicase ATP-binding domain. 128–135 (ARTGTGKT) provides a ligand contact to ATP. A DEAD box motif is present at residues 236–239 (DEAD). Residues 317–462 (ILGPLIKEHA…LPKIEVADEA (146 aa)) form the Helicase C-terminal domain. Residues 503–602 (FGDFDGFGSS…GRSGGFDDSN (100 aa)) are disordered.

This sequence belongs to the DEAD box helicase family. DDX21/DDX50 subfamily.

It carries out the reaction ATP + H2O = ADP + phosphate + H(+). This Oryza sativa subsp. japonica (Rice) protein is DEAD-box ATP-dependent RNA helicase 53.